Consider the following 343-residue polypeptide: Anthranilate phosphoribosyltransferase (343 aa).

Residues Gly-85, 88–89, Thr-93, 95–98, 113–121, and Ala-125 each bind 5-phospho-alpha-D-ribose 1-diphosphate; these read GD, NIST, and KHGGRSVSS. Gly-85 serves as a coordination point for anthranilate. Ser-97 lines the Mg(2+) pocket. Arg-171 contacts anthranilate. Residues Asp-230 and Glu-231 each coordinate Mg(2+).

The protein belongs to the anthranilate phosphoribosyltransferase family. In terms of assembly, homodimer. Mg(2+) serves as cofactor.

The catalysed reaction is N-(5-phospho-beta-D-ribosyl)anthranilate + diphosphate = 5-phospho-alpha-D-ribose 1-diphosphate + anthranilate. The protein operates within amino-acid biosynthesis; L-tryptophan biosynthesis; L-tryptophan from chorismate: step 2/5. In terms of biological role, catalyzes the transfer of the phosphoribosyl group of 5-phosphorylribose-1-pyrophosphate (PRPP) to anthranilate to yield N-(5'-phosphoribosyl)-anthranilate (PRA). This is Anthranilate phosphoribosyltransferase from Aromatoleum aromaticum (strain DSM 19018 / LMG 30748 / EbN1) (Azoarcus sp. (strain EbN1)).